We begin with the raw amino-acid sequence, 134 residues long: Complexin-1 (134 aa).

The segment at M1–E112 is disordered. Over residues D15 to E81 the composition is skewed to basic and acidic residues. Residues D29–K69 adopt a coiled-coil conformation. Residues R48–Y70 are interaction with the SNARE complex.

It belongs to the complexin/synaphin family. As to quaternary structure, binds to the SNARE core complex containing SNAP25, VAMP2 and STX1A.

The protein localises to the cytoplasm. It localises to the cytosol. It is found in the perikaryon. The protein resides in the presynapse. In terms of biological role, positively regulates a late step in synaptic vesicle exocytosis. Organizes the SNAREs into a cross-linked zigzag topology that, when interposed between the vesicle and plasma membranes, is incompatible with fusion, thereby preventing SNAREs from releasing neurotransmitters until an action potential arrives at the synapse. Also involved in glucose-induced secretion of insulin by pancreatic beta-cells. The polypeptide is Complexin-1 (CPLX1) (Bos taurus (Bovine)).